We begin with the raw amino-acid sequence, 253 residues long: 5'/3'-nucleotidase SurE (253 aa).

A divalent metal cation-binding residues include Asp8, Asp9, Ser39, and Asn92.

The protein belongs to the SurE nucleotidase family. The cofactor is a divalent metal cation.

The protein resides in the cytoplasm. The catalysed reaction is a ribonucleoside 5'-phosphate + H2O = a ribonucleoside + phosphate. It catalyses the reaction a ribonucleoside 3'-phosphate + H2O = a ribonucleoside + phosphate. It carries out the reaction [phosphate](n) + H2O = [phosphate](n-1) + phosphate + H(+). Its function is as follows. Nucleotidase with a broad substrate specificity as it can dephosphorylate various ribo- and deoxyribonucleoside 5'-monophosphates and ribonucleoside 3'-monophosphates with highest affinity to 3'-AMP. Also hydrolyzes polyphosphate (exopolyphosphatase activity) with the preference for short-chain-length substrates (P20-25). Might be involved in the regulation of dNTP and NTP pools, and in the turnover of 3'-mononucleotides produced by numerous intracellular RNases (T1, T2, and F) during the degradation of various RNAs. The chain is 5'/3'-nucleotidase SurE from Cronobacter sakazakii (strain ATCC BAA-894) (Enterobacter sakazakii).